Consider the following 81-residue polypeptide: Neuronatin (81 aa).

It belongs to the neuronatin family.

Functionally, may participate in the maintenance of segment identity in the hindbrain and pituitary development, and maturation or maintenance of the overall structure of the nervous system. May function as a regulatory subunit of ion channels. This is Neuronatin (NNAT) from Homo sapiens (Human).